We begin with the raw amino-acid sequence, 114 residues long: U17-barytoxin-Tl1a (114 aa).

The signal sequence occupies residues 1–20 (MKTIIVFLSLLVLATKFGDA). Residues 21 to 74 (NEGVNQEQMKEVIQNEFREDFLNEMAPMSLLQQLEAIESTLLEKEADRNSRQKR) constitute a propeptide that is removed on maturation. 3 disulfide bridges follow: Cys-75–Cys-88, Cys-82–Cys-93, and Cys-87–Cys-108.

Belongs to the neurotoxin 14 (magi-1) family. 03 (ICK-30-40) subfamily. In terms of tissue distribution, expressed by the venom gland.

It localises to the secreted. Functionally, ion channel inhibitor. In Trittame loki (Brush-footed trapdoor spider), this protein is U17-barytoxin-Tl1a.